The primary structure comprises 153 residues: Ribonuclease H (153 aa).

In terms of domain architecture, RNase H type-1 spans 1–141; the sequence is MKHVHIFTDG…ADELARKGME (141 aa). Residues Asp-9, Glu-47, Asp-69, and Asp-133 each contribute to the Mg(2+) site. The interval 123-153 is disordered; it reads HAGHPENERADELARKGMEPFKKARRADAVK. Over residues 125 to 153 the composition is skewed to basic and acidic residues; the sequence is GHPENERADELARKGMEPFKKARRADAVK.

The protein belongs to the RNase H family. As to quaternary structure, monomer. Mg(2+) serves as cofactor.

It localises to the cytoplasm. It carries out the reaction Endonucleolytic cleavage to 5'-phosphomonoester.. Endonuclease that specifically degrades the RNA of RNA-DNA hybrids. The protein is Ribonuclease H of Rhizobium meliloti (strain 1021) (Ensifer meliloti).